The chain runs to 242 residues: Small ribosomal subunit protein uS2 (242 aa).

Belongs to the universal ribosomal protein uS2 family.

This chain is Small ribosomal subunit protein uS2, found in Aliivibrio fischeri (strain ATCC 700601 / ES114) (Vibrio fischeri).